Reading from the N-terminus, the 372-residue chain is Queuine tRNA-ribosyltransferase (372 aa).

The active-site Proton acceptor is Asp-93. Substrate contacts are provided by residues 93-97 (DSGGF), Asp-147, Gln-190, and Gly-217. The interval 248-254 (GVGSPDC) is RNA binding. The active-site Nucleophile is Asp-267. Positions 272-276 (TRMAR) are RNA binding; important for wobble base 34 recognition. Cys-305, Cys-307, Cys-310, and His-336 together coordinate Zn(2+).

This sequence belongs to the queuine tRNA-ribosyltransferase family. As to quaternary structure, homodimer. Within each dimer, one monomer is responsible for RNA recognition and catalysis, while the other monomer binds to the replacement base PreQ1. The cofactor is Zn(2+).

The catalysed reaction is 7-aminomethyl-7-carbaguanine + guanosine(34) in tRNA = 7-aminomethyl-7-carbaguanosine(34) in tRNA + guanine. Its pathway is tRNA modification; tRNA-queuosine biosynthesis. Its function is as follows. Catalyzes the base-exchange of a guanine (G) residue with the queuine precursor 7-aminomethyl-7-deazaguanine (PreQ1) at position 34 (anticodon wobble position) in tRNAs with GU(N) anticodons (tRNA-Asp, -Asn, -His and -Tyr). Catalysis occurs through a double-displacement mechanism. The nucleophile active site attacks the C1' of nucleotide 34 to detach the guanine base from the RNA, forming a covalent enzyme-RNA intermediate. The proton acceptor active site deprotonates the incoming PreQ1, allowing a nucleophilic attack on the C1' of the ribose to form the product. After dissociation, two additional enzymatic reactions on the tRNA convert PreQ1 to queuine (Q), resulting in the hypermodified nucleoside queuosine (7-(((4,5-cis-dihydroxy-2-cyclopenten-1-yl)amino)methyl)-7-deazaguanosine). This chain is Queuine tRNA-ribosyltransferase, found in Desulforudis audaxviator (strain MP104C).